The primary structure comprises 214 residues: Large ribosomal subunit protein uL16 (214 aa).

The protein belongs to the universal ribosomal protein uL16 family. Component of the large ribosomal subunit. Mature ribosomes consist of a small (40S) and a large (60S) subunit. The 40S subunit contains about 33 different proteins and 1 molecule of RNA (18S). The 60S subunit contains about 49 different proteins and 3 molecules of RNA (28S, 5.8S and 5S).

The chain is Large ribosomal subunit protein uL16 (rpl-10L) from Caenorhabditis elegans.